The chain runs to 601 residues: NADPH--cytochrome P450 reductase (601 aa).

Residues 25 to 169 (IVVFYGSQTG…DFVTWREQFW (145 aa)) enclose the Flavodoxin-like domain. Residues 31–36 (SQTGTG), 83–86 (ATYG), 118–127 (LGDKTYEHYN), and Asp-153 contribute to the FMN site. Positions 224–425 (KNPFLAPVTV…ICAVLVEYXT (202 aa)) constitute an FAD-binding FR-type domain. FAD-binding positions include 399–402 (RYYS), 417–419 (CAV), Tyr-423, and 427–430 (GVAT). NADP(+)-binding positions include Thr-458, 519-520 (SR), 525-529 (KVYVQ), and Asp-562. FAD is bound at residue Trp-600.

It belongs to the NADPH--cytochrome P450 reductase family. This sequence in the N-terminal section; belongs to the flavodoxin family. The protein in the C-terminal section; belongs to the flavoprotein pyridine nucleotide cytochrome reductase family. FAD is required as a cofactor. Requires FMN as cofactor.

The protein resides in the endoplasmic reticulum membrane. The enzyme catalyses 2 oxidized [cytochrome P450] + NADPH = 2 reduced [cytochrome P450] + NADP(+) + H(+). Its function is as follows. This enzyme is required for electron transfer from NADP to cytochrome P450 in microsomes. It can also provide electron transfer to heme oxygenase and cytochrome B5. The sequence is that of NADPH--cytochrome P450 reductase from Salmo trutta (Brown trout).